Reading from the N-terminus, the 183-residue chain is Ribosome-recycling factor (183 aa).

Belongs to the RRF family.

The protein localises to the cytoplasm. In terms of biological role, responsible for the release of ribosomes from messenger RNA at the termination of protein biosynthesis. May increase the efficiency of translation by recycling ribosomes from one round of translation to another. The protein is Ribosome-recycling factor of Mycoplasma genitalium (strain ATCC 33530 / DSM 19775 / NCTC 10195 / G37) (Mycoplasmoides genitalium).